Here is a 254-residue protein sequence, read N- to C-terminus: Aspartate/glutamate leucyltransferase (254 aa).

It belongs to the R-transferase family. Bpt subfamily.

It is found in the cytoplasm. It catalyses the reaction N-terminal L-glutamyl-[protein] + L-leucyl-tRNA(Leu) = N-terminal L-leucyl-L-glutamyl-[protein] + tRNA(Leu) + H(+). The enzyme catalyses N-terminal L-aspartyl-[protein] + L-leucyl-tRNA(Leu) = N-terminal L-leucyl-L-aspartyl-[protein] + tRNA(Leu) + H(+). Functionally, functions in the N-end rule pathway of protein degradation where it conjugates Leu from its aminoacyl-tRNA to the N-termini of proteins containing an N-terminal aspartate or glutamate. This chain is Aspartate/glutamate leucyltransferase, found in Xylella fastidiosa (strain M23).